Consider the following 323-residue polypeptide: Phosphate acetyltransferase (323 aa).

Belongs to the phosphate acetyltransferase and butyryltransferase family.

The protein localises to the cytoplasm. It catalyses the reaction acetyl-CoA + phosphate = acetyl phosphate + CoA. The protein operates within metabolic intermediate biosynthesis; acetyl-CoA biosynthesis; acetyl-CoA from acetate: step 2/2. The sequence is that of Phosphate acetyltransferase (pta) from Bacillus subtilis (strain 168).